We begin with the raw amino-acid sequence, 335 residues long: Nod factor export ATP-binding protein I (335 aa).

The span at 1–10 (MTQEVPRRLE) shows a compositional bias: basic and acidic residues. The segment at 1 to 22 (MTQEVPRRLEPSPFEWKGDAGP) is disordered. In terms of domain architecture, ABC transporter spans 37 to 267 (IDLASVTKSY…KIGCQVIEIY (231 aa)). An ATP-binding site is contributed by 69-76 (GPNGAGKS).

This sequence belongs to the ABC transporter superfamily. Lipooligosaccharide exporter (TC 3.A.1.102) family. As to quaternary structure, the complex is composed of two ATP-binding proteins (NodI) and two transmembrane proteins (NodJ).

The protein resides in the cell inner membrane. Functionally, part of the ABC transporter complex NodIJ involved in the export of the nodulation factors (Nod factors), the bacterial signal molecules that induce symbiosis and subsequent nodulation induction. Nod factors are LCO (lipo-chitin oligosaccharide), a modified beta-1,4-linked N-acetylglucosamine oligosaccharide. This subunit is responsible for energy coupling to the transport system. The chain is Nod factor export ATP-binding protein I from Rhizobium meliloti (Ensifer meliloti).